A 101-amino-acid chain; its full sequence is NADH-quinone oxidoreductase subunit K (101 aa).

3 helical membrane passes run P5–F25, I30–F50, and L62–I82.

The protein belongs to the complex I subunit 4L family. In terms of assembly, NDH-1 is composed of 14 different subunits. Subunits NuoA, H, J, K, L, M, N constitute the membrane sector of the complex.

The protein localises to the cell inner membrane. The enzyme catalyses a quinone + NADH + 5 H(+)(in) = a quinol + NAD(+) + 4 H(+)(out). In terms of biological role, NDH-1 shuttles electrons from NADH, via FMN and iron-sulfur (Fe-S) centers, to quinones in the respiratory chain. The immediate electron acceptor for the enzyme in this species is believed to be a menaquinone. Couples the redox reaction to proton translocation (for every two electrons transferred, four hydrogen ions are translocated across the cytoplasmic membrane), and thus conserves the redox energy in a proton gradient. The chain is NADH-quinone oxidoreductase subunit K from Salinibacter ruber (strain DSM 13855 / M31).